Consider the following 116-residue polypeptide: MAVIQFIQGVNEDVIPDVRLTRSRDGSTGTATFRFANPKVLEAQSSVKGNITGMYLIDEEGQLVTRDVNARFVNGKPQGIEAVYIMQSKEDWDRFMRFMERYSEDNGLSFTKANNS.

This sequence belongs to the Psb28 family. Part of the photosystem II complex.

The protein localises to the plastid. It is found in the chloroplast thylakoid membrane. This chain is Photosystem II reaction center Psb28 protein, found in Guillardia theta (Cryptophyte).